We begin with the raw amino-acid sequence, 495 residues long: UDP-N-acetylmuramoyl-L-alanyl-D-glutamate--2,6-diaminopimelate ligase (495 aa).

UDP-N-acetyl-alpha-D-muramoyl-L-alanyl-D-glutamate is bound by residues Leu27, Ser29, and 44–46 (HQA). Position 116–122 (116–122 (GTNGKTT)) interacts with ATP. UDP-N-acetyl-alpha-D-muramoyl-L-alanyl-D-glutamate contacts are provided by residues Asn157, 158–159 (TT), Ser185, Gln191, and Arg193. N6-carboxylysine is present on Lys225. Meso-2,6-diaminopimelate is bound by residues Arg390, 414–417 (DNPR), Gly465, and Glu469. The Meso-diaminopimelate recognition motif signature appears at 414-417 (DNPR).

Belongs to the MurCDEF family. MurE subfamily. Mg(2+) serves as cofactor. Post-translationally, carboxylation is probably crucial for Mg(2+) binding and, consequently, for the gamma-phosphate positioning of ATP.

The protein resides in the cytoplasm. It carries out the reaction UDP-N-acetyl-alpha-D-muramoyl-L-alanyl-D-glutamate + meso-2,6-diaminopimelate + ATP = UDP-N-acetyl-alpha-D-muramoyl-L-alanyl-gamma-D-glutamyl-meso-2,6-diaminopimelate + ADP + phosphate + H(+). It participates in cell wall biogenesis; peptidoglycan biosynthesis. Functionally, catalyzes the addition of meso-diaminopimelic acid to the nucleotide precursor UDP-N-acetylmuramoyl-L-alanyl-D-glutamate (UMAG) in the biosynthesis of bacterial cell-wall peptidoglycan. This Salmonella choleraesuis (strain SC-B67) protein is UDP-N-acetylmuramoyl-L-alanyl-D-glutamate--2,6-diaminopimelate ligase.